The sequence spans 398 residues: Acetate kinase (398 aa).

A Mg(2+)-binding site is contributed by N7. K14 lines the ATP pocket. R91 provides a ligand contact to substrate. D148 serves as the catalytic Proton donor/acceptor. Residues 208–212 (HLGNG), 283–285 (DFR), and 331–335 (GIGEH) contribute to the ATP site. E386 contributes to the Mg(2+) binding site.

The protein belongs to the acetokinase family. Homodimer. Requires Mg(2+) as cofactor. Mn(2+) is required as a cofactor.

The protein resides in the cytoplasm. It carries out the reaction acetate + ATP = acetyl phosphate + ADP. Its pathway is metabolic intermediate biosynthesis; acetyl-CoA biosynthesis; acetyl-CoA from acetate: step 1/2. In terms of biological role, catalyzes the formation of acetyl phosphate from acetate and ATP. Can also catalyze the reverse reaction. This chain is Acetate kinase, found in Clostridium botulinum (strain Alaska E43 / Type E3).